The sequence spans 374 residues: Potassium channel subfamily K member 9 (374 aa).

Residues 1-8 (MKRQNVRT) lie on the Cytoplasmic side of the membrane. Residues 9–29 (LSLIVCTFTYLLVGAAVFDAL) traverse the membrane as a helical segment. Topologically, residues 30–88 (ESDHEMREEEKLKAEEIRIKGKYNISSEDYRQLELVILQSEPHRAGVQWKFAGSFYFAI) are extracellular. Asparagine 53 carries N-linked (GlcNAc...) asparagine glycosylation. The segment at residues 89 to 101 (TVITTIGYGHAAP) is an intramembrane region (pore-forming). Residues threonine 93, isoleucine 94, glycine 95, and tyrosine 96 each coordinate K(+). Positions 93 to 98 (TIGYGH) are selectivity filter 1. The Extracellular portion of the chain corresponds to 102-107 (GTDAGK). A helical membrane pass occupies residues 108–128 (AFCMFYAVLGIPLTLVMFQSL). Residues 129–158 (GERMNTFVRYLLKRIKKCCGMRNTDVSMEN) are Cytoplasmic-facing. A helical membrane pass occupies residues 159 to 179 (MVTVGFFSCMGTLCIGAAAFS). Over 180–194 (QCEEWSFFHAYYYCF) the chain is Extracellular. The pore-forming intramembrane region spans 195–207 (ITLTTIGFGDYVA). Positions 199, 200, 201, and 202 each coordinate K(+). The tract at residues 199 to 204 (TIGFGD) is selectivity filter 2. At 208–218 (LQTKGALQKKP) the chain is on the extracellular side. Residues 219–239 (LYVAFSFMYILVGLTVIGAFL) traverse the membrane as a helical segment. Over 240–374 (NLVVLRFLTM…QRLMKRRKSV (135 aa)) the chain is Cytoplasmic. The segment at 243–248 (VLRFLT) is X-gate.

The protein belongs to the two pore domain potassium channel (TC 1.A.1.8) family. As to quaternary structure, homodimer. Heterodimer with KCNK1. Heterodimer with KCNK3. In terms of tissue distribution, mainly found in the cerebellum. Also found in adrenal gland, kidney and lung.

Its subcellular location is the cell membrane. It is found in the mitochondrion inner membrane. It localises to the cell projection. The protein localises to the dendrite. It carries out the reaction K(+)(in) = K(+)(out). The enzyme catalyses Na(+)(in) = Na(+)(out). Its activity is regulated as follows. Inhibited by extracellular acidification adopting a nonconductive conformation at pH 6.0. Inhibited by phorbol 12-myristate 13-acetate (PMA). Functionally, k(+) channel that conducts voltage-dependent outward rectifying currents upon membrane depolarization. Voltage sensing is coupled to K(+) electrochemical gradient in an 'ion flux gating' mode where outward but not inward ion flow opens the gate. Changes ion selectivity and becomes permeable to Na(+) ions in response to extracellular acidification. Protonation of the pH sensor His-98 stabilizes C-type inactivation conformation likely converting the channel from outward K(+)-conducting, to inward Na(+)-conducting to nonconductive state. Homo- and heterodimerizes to form functional channels with distinct regulatory and gating properties. Allows K(+) currents with fast-gating kinetics important for the repolarization and hyperpolarization phases of action potentials. In granule neurons, hyperpolarizes the resting membrane potential to limit intrinsic neuronal excitability, but once the action potential threshold is reached, supports high-frequency action potential firing and increased neuronal excitability. Homomeric and/or heteromeric KCNK3:KCNK9 channels operate in cerebellar granule cells, whereas heteromeric KCNK1:KCNK9 enables currents in hippocampal dentate gyrus granule neurons. Dispensable for central chemosensory respiration i.e. breathing controlled by brainstem CO2/pH, it rather conducts pH-sensitive currents and controls the firing rate of serotonergic raphe neurons involved in potentiation of the respiratory chemoreflex. In retinal ganglion cells, mediates outward currents that regulate action potentials in response to acidification of the synaptic cleft. Involved in transmission of image-forming and nonimage-forming visual information in the retina. In adrenal gland, contributes to the maintenance of a hyperpolarized resting membrane potential of aldosterone-producing cells at zona glomerulosa and limits aldosterone release as part of a regulatory mechanism that controls arterial blood pressure and electrolyte homeostasis. This chain is Potassium channel subfamily K member 9, found in Homo sapiens (Human).